The sequence spans 339 residues: Outer membrane protein assembly factor BamC (339 aa).

The signal sequence occupies residues Met-1–Ala-19. Residue Cys-20 is the site of N-palmitoyl cysteine attachment. A lipid anchor (S-diacylglycerol cysteine) is attached at Cys-20.

Belongs to the BamC family. Part of the Bam complex.

The protein resides in the cell outer membrane. Functionally, part of the outer membrane protein assembly complex, which is involved in assembly and insertion of beta-barrel proteins into the outer membrane. This is Outer membrane protein assembly factor BamC from Vibrio cholerae serotype O1 (strain ATCC 39315 / El Tor Inaba N16961).